Here is a 256-residue protein sequence, read N- to C-terminus: Thiazole synthase (256 aa).

The active-site Schiff-base intermediate with DXP is the lysine 96. 1-deoxy-D-xylulose 5-phosphate is bound by residues glycine 157, alanine 184–glycine 185, and asparagine 206–threonine 207.

It belongs to the ThiG family. In terms of assembly, homotetramer. Forms heterodimers with either ThiH or ThiS.

The protein localises to the cytoplasm. The enzyme catalyses [ThiS sulfur-carrier protein]-C-terminal-Gly-aminoethanethioate + 2-iminoacetate + 1-deoxy-D-xylulose 5-phosphate = [ThiS sulfur-carrier protein]-C-terminal Gly-Gly + 2-[(2R,5Z)-2-carboxy-4-methylthiazol-5(2H)-ylidene]ethyl phosphate + 2 H2O + H(+). It functions in the pathway cofactor biosynthesis; thiamine diphosphate biosynthesis. Functionally, catalyzes the rearrangement of 1-deoxy-D-xylulose 5-phosphate (DXP) to produce the thiazole phosphate moiety of thiamine. Sulfur is provided by the thiocarboxylate moiety of the carrier protein ThiS. In vitro, sulfur can be provided by H(2)S. The protein is Thiazole synthase of Brucella anthropi (strain ATCC 49188 / DSM 6882 / CCUG 24695 / JCM 21032 / LMG 3331 / NBRC 15819 / NCTC 12168 / Alc 37) (Ochrobactrum anthropi).